We begin with the raw amino-acid sequence, 282 residues long: Type 1 encapsulin shell protein (282 aa).

The protein belongs to the encapsulin family. Family 1 subfamily. As to quaternary structure, initially thought to form a 180 subunit shell. Forms hollow shells composed of 240 subunits, making a shell about 42-43 nm in diameter. The monomer is capable of assuming 4 different conformations which allows packaging into the icosahedron. The shell has 12 pentameric and 30 hexameric capsomers which form the vertices and faces of the icosahedral nanocompartment.

It is found in the encapsulin nanocompartment. In terms of biological role, shell component of a type 1 encapsulin nanocompartment. Assembles into proteinaceous icosahedral shells 42-43 nm in diameter with an iron- and phosphorus-rich core (1Fe:1.1P) which can store over 23,000-35,000 iron atoms (with a calculated maximum of 83,000 Fe). There are 2 types of negatively charged open pores in the cryo-electron structure; a 3-fold pore where 3 hexamers meet with a minimal size of 7.2 Angstroms and a 5-fold pore where pentamers meet with a minimal size of 2.3 Angstroms. The 2-fold pore seen in other encapsulin nanocompartments is closed. Empty compartments can be generated in E.coli. Both types of pore have extra density in their centers in the structure. 2 different cargo proteins have been identified (IMEF and Fer); when both are expressed in E.coli with the shell protein only IMEF is detected within the nanocompartment. E.coli expressing all 3 genes stores the largest amount of iron and is protected from Fe/H2O2-induced oxidative stress. Part of the iron-mineralizing encapsulin-associated Firmicute (IMEF) system. This is Type 1 encapsulin shell protein from Bacillus thermotolerans (Quasibacillus thermotolerans).